The sequence spans 289 residues: Melatonin receptor type 1B (289 aa).

The Cytoplasmic segment spans residues 1–2 (GN). The helical transmembrane segment at 3-23 (AFVVSLALADLVVALYPYPLV) threads the bilayer. The Extracellular portion of the chain corresponds to 24-41 (LLAIFHNGWTLGEMHCKV). Residues Cys39 and Cys116 are joined by a disulfide bond. Residues 42–62 (SGFVMGLSVIGSIFNITAIAI) form a helical membrane-spanning segment. Residues 63 to 81 (NRYCYICHSFAYDKVYSCW) lie on the Cytoplasmic side of the membrane. A helical membrane pass occupies residues 82–102 (NTMLYVSLIWVLTVIATVPNF). Residues 103 to 126 (FVGSLKYDPRIYSCTFVQTASSYY) lie on the Extracellular side of the membrane. The chain crosses the membrane as a helical span at residues 127–147 (TIAVVVIHFIVPITVVSFCYL). Residues 148–179 (RIWVLVLQVRRRVKSETKPRLKPSDFRNFLTM) lie on the Cytoplasmic side of the membrane. The chain crosses the membrane as a helical span at residues 180-200 (FVVFVIFAFCWAPLNFIGLAV). Residues 201–213 (AINPSEMAPKVPE) lie on the Extracellular side of the membrane. The helical transmembrane segment at 214 to 234 (WLFIISYFMAYFNSCLNAIIY) threads the bilayer. At 235-289 (GLLNQNFRNEYKRILMSLWMPRLFFQDTSKGGTDGQKSKPSPALNNNDQMKTDTL) the chain is on the cytoplasmic side. The disordered stretch occupies residues 264 to 289 (KGGTDGQKSKPSPALNNNDQMKTDTL).

Belongs to the G-protein coupled receptor 1 family. Brain and kidney, with trace levels in lungs.

It localises to the cell membrane. High affinity receptor for melatonin. The activity of this receptor is mediated by pertussis toxin sensitive G proteins that inhibits adenylate cyclase activity. The protein is Melatonin receptor type 1B of Gallus gallus (Chicken).